The following is a 174-amino-acid chain: Fimbria A protein (174 aa).

A signal peptide spans 1–22; that stretch reads MKLNKIMLATVLAFGVSSLANA. Cysteine 41 and cysteine 80 form a disulfide bridge.

The protein belongs to the fimbrial protein family.

Its subcellular location is the fimbrium. Functionally, major structural component of mannose-resistant fimbriae of Serratia marcescens. The sequence is that of Fimbria A protein (smfA) from Serratia marcescens.